The sequence spans 180 residues: uncharacterized protein (180 aa).

The Nudix hydrolase domain maps to 35–163; sequence LRHRATYIVV…TPDSLKALAL (129 aa). The short motif at 72–94 is the Nudix box element; that stretch reads GGVVQADEQLLESARREAEEELG. Mg(2+) is bound by residues Glu88 and Glu92.

This sequence belongs to the Nudix hydrolase family. It depends on Mg(2+) as a cofactor.

This is an uncharacterized protein from Escherichia coli O157:H7.